A 184-amino-acid polypeptide reads, in one-letter code: Myeloproliferative leukemia protein (184 aa).

The WSXWS motif signature appears at 26–30 (WSAWS). A helical transmembrane segment spans residues 44 to 64 (ITLVTALLLVLSLSALLGLLL). The short motif at 80-88 (LWPSLPDLH) is the Box 1 motif element.

The protein belongs to the type I cytokine receptor family. Type 1 subfamily.

It is found in the membrane. Functionally, truncated form of the receptor for thrombopoietin. The sequence is that of Myeloproliferative leukemia protein (V-MPL) from Mus musculus (Mouse).